We begin with the raw amino-acid sequence, 391 residues long: Elongation factor Tu (391 aa).

One can recognise a tr-type G domain in the interval 10-201; sequence KPHVNIGTIG…EVDNYIPTPE (192 aa). Positions 19 to 26 are G1; that stretch reads GHVDHGKT. GTP is bound at residue 19–26; sequence GHVDHGKT. Threonine 26 serves as a coordination point for Mg(2+). The G2 stretch occupies residues 55 to 59; sequence GITIS. Residues 76–79 form a G3 region; it reads DCPG. Residues 76–80 and 131–134 contribute to the GTP site; these read DCPGH and NKVD. Positions 131–134 are G4; the sequence is NKVD. Residues 169–171 form a G5 region; sequence SAL.

The protein belongs to the TRAFAC class translation factor GTPase superfamily. Classic translation factor GTPase family. EF-Tu/EF-1A subfamily. Monomer.

It localises to the cytoplasm. The catalysed reaction is GTP + H2O = GDP + phosphate + H(+). Functionally, GTP hydrolase that promotes the GTP-dependent binding of aminoacyl-tRNA to the A-site of ribosomes during protein biosynthesis. This Bartonella henselae (strain ATCC 49882 / DSM 28221 / CCUG 30454 / Houston 1) (Rochalimaea henselae) protein is Elongation factor Tu.